Here is a 97-residue protein sequence, read N- to C-terminus: Core protein A15 homolog (97 aa).

This sequence belongs to the chordopoxvirinae A15 family. In terms of assembly, part of a complex composed of A30, G7, F10 kinase, A15, D2, D3, and J1.

It is found in the host cytoplasm. The protein localises to the virion. Functionally, late protein which is a part of a large complex required for early virion morphogenesis. This complex participates in the formation of virosomes and the incorporation of virosomal contents into nascent immature virions. A15 is required for the stability and kinase activity of F10. The sequence is that of Core protein A15 homolog from Vertebrata (FPV).